The following is a 446-amino-acid chain: MMITLRKLPLAVAVAAGVMSAQAMAVDFHGYARSGIGWTGSGGEQQCFQTTGAQSKYRLGNECETYAELKLGQEVWKEGDKSFYFDTNVAYSVAQQNDWEATDPAFREANVQGKNLIEWLPGSTIWAGKRFYQRHDVHMIDFYYWDISGPGAGLENIDVGFGKLSLAATRSSEAGGSSSFASNNIYDYTNETANDVFDVRLAQMEINPGGTLELGVDYGRANLRDNYRLVDGASKDGWLFTAEHTQSVLKGFNKFVVQYATDSMTSQGKGLSQGSGVAFDNEKFAYNINNNGHMLRILDHGAISMGDNWDMMYVGMYQDINWDNDNGTKWWTVGIRPMYKWTPIMSTVMEIGYDNVESQRTGDKNNQYKITLAQQWQAGDSIWSRPAIRVFATYAKWDEKWGYDYTGNANTNTNFGKAVPADFNGGSFGRGDSDEWTFGAQMEIWW.

Positions 1–25 (MMITLRKLPLAVAVAAGVMSAQAMA) are cleaved as a signal peptide.

Belongs to the porin LamB (TC 1.B.3) family. Homotrimer formed of three 18-stranded antiparallel beta-barrels, containing three independent channels.

The protein localises to the cell outer membrane. It carries out the reaction beta-maltose(in) = beta-maltose(out). Its function is as follows. Involved in the transport of maltose and maltodextrins. This chain is Maltoporin, found in Escherichia coli O7:K1 (strain IAI39 / ExPEC).